A 462-amino-acid polypeptide reads, in one-letter code: EPD1-interacting receptor-like cytoplasmic serine/threonine-protein kinase 5A (462 aa).

In terms of domain architecture, Protein kinase spans 85-366 (FSSANFLGEG…DVVNILEPLL (282 aa)). Residues 91–99 (LGEGGFGPV) and Lys-120 contribute to the ATP site. 2 positions are modified to phosphotyrosine: Tyr-165 and Tyr-167. The Proton acceptor role is filled by Asp-215.

The protein belongs to the protein kinase superfamily. Ser/Thr protein kinase family. In terms of assembly, interacts with the Verticillium dahliae elicitor EPD1 (AC G2WWH6). In terms of processing, phosphorylated at Tyr-165 and Tyr-167 in the presence of pathogen-associated molecular patterns (PAMPs); this triggers the expression of pathogenesis-related genes (e.g. PR5 and PR16). As to expression, mostly expressed in roots and, to a lesser extent, in leaves.

Its subcellular location is the cell membrane. It carries out the reaction L-seryl-[protein] + ATP = O-phospho-L-seryl-[protein] + ADP + H(+). It catalyses the reaction L-threonyl-[protein] + ATP = O-phospho-L-threonyl-[protein] + ADP + H(+). Functionally, required for pathogen-associated molecular pattern (PAMP, e.g. chitin and flg22)-triggered immunity (PTI) involving reactive oxygen species (ROS) accumulation and triggering plant defense, including defense-related gene expression (e.g. PR1 and LOX). Ensures specific recognition of the EPD1 effector of Verticillium dahliae, resulting in a hypersensitive response known as effector-triggered immunity (ETI), characterized by the activation of programmed cell death to limit infection by the pathogen. Priming plants with the incompatible pathogen V.dahliae leads to an increased resistance to compatible pathogens, as a result of systemic acquired resistance (SAR). In Gossypium barbadense (Sea Island cotton), this protein is EPD1-interacting receptor-like cytoplasmic serine/threonine-protein kinase 5A.